The sequence spans 808 residues: Dynamin-like protein B (808 aa).

A Dynamin-type G domain is found at 43 to 340; it reads FIETPEFVFI…TWRKYLDSVP (298 aa). Residues 53–60 are G1 motif; the sequence is GKDGNGKS. 53–60 lines the GTP pocket; the sequence is GKDGNGKS. The interval 79–80 is G2 motif; that stretch reads LR. Residues 150-153 form a G3 motif region; the sequence is EPPS. GTP is bound by residues 150–154 and 239–242; these read EPPSV and NKFH. The G4 motif stretch occupies residues 239-242; that stretch reads NKFH. Positions 276-279 are G5 motif; that stretch reads PSTA. Disordered stretches follow at residues 536–565 and 665–695; these read SSFR…SSSI and SLNN…NSNH. Low complexity-rich tracts occupy residues 552–565 and 665–694; these read SSPS…SSSI and SLNN…NNSN.

The protein belongs to the TRAFAC class dynamin-like GTPase superfamily. Dynamin/Fzo/YdjA family.

It is found in the cytoplasm. The enzyme catalyses GTP + H2O = GDP + phosphate + H(+). Functionally, involved in cytokinesis. May hydrolyze GTP. The polypeptide is Dynamin-like protein B (dlpB) (Dictyostelium discoideum (Social amoeba)).